A 215-amino-acid polypeptide reads, in one-letter code: Adenylate kinase (215 aa).

10–15 provides a ligand contact to ATP; sequence GAGKGT. Residues 30-59 are NMP; it reads STGDMLREAVAAGTELGKKVKEIIEKGLLV. Residues threonine 31, arginine 36, 57-59, 85-88, and glutamine 92 each bind AMP; these read LLV and GFPR. The LID stretch occupies residues 126 to 163; that stretch reads SRRVCPSCGKVYNLLTIKPKNDMLCDDCNIGLIQREDD. ATP is bound at residue arginine 127. Residues cysteine 130 and cysteine 133 each coordinate Zn(2+). ATP is bound at residue 136–137; that stretch reads VY. The Zn(2+) site is built by cysteine 150 and cysteine 153. Residues arginine 160 and arginine 171 each contribute to the AMP site. Leucine 199 contributes to the ATP binding site.

The protein belongs to the adenylate kinase family. Monomer.

It is found in the cytoplasm. It carries out the reaction AMP + ATP = 2 ADP. The protein operates within purine metabolism; AMP biosynthesis via salvage pathway; AMP from ADP: step 1/1. In terms of biological role, catalyzes the reversible transfer of the terminal phosphate group between ATP and AMP. Plays an important role in cellular energy homeostasis and in adenine nucleotide metabolism. The polypeptide is Adenylate kinase (Kosmotoga olearia (strain ATCC BAA-1733 / DSM 21960 / TBF 19.5.1)).